A 500-amino-acid chain; its full sequence is Na(+)/H(+) antiporter NhaB (500 aa).

Transmembrane regions (helical) follow at residues 13–33 (FLGA…IINP), 34–54 (IAVV…EFIF), 62–82 (CYPL…GLTS), 97–117 (ILLL…LLFI), 129–149 (IVIS…LDAL), 242–262 (FLYV…TVVI), 306–326 (GIVA…VGLV), 350–370 (FEEA…VSVI), 392–412 (PIMF…VFVA), 449–469 (VATP…IAPL), and 477–497 (MVWM…LCVT).

It belongs to the NhaB Na(+)/H(+) (TC 2.A.34) antiporter family.

It localises to the cell inner membrane. The enzyme catalyses 2 Na(+)(in) + 3 H(+)(out) = 2 Na(+)(out) + 3 H(+)(in). Its function is as follows. Na(+)/H(+) antiporter that extrudes sodium in exchange for external protons. This is Na(+)/H(+) antiporter NhaB from Marinomonas sp. (strain MWYL1).